We begin with the raw amino-acid sequence, 340 residues long: Flap endonuclease 1 (340 aa).

An N-domain region spans residues 1–98 (MGVPIGEIIP…KELEKRREAR (98 aa)). Mg(2+) contacts are provided by aspartate 27, aspartate 80, glutamate 152, glutamate 154, aspartate 173, aspartate 175, and aspartate 236. The segment at 116 to 258 (EARKYAQRAT…KALEIVRHSK (143 aa)) is I-domain. An interaction with PCNA region spans residues 330 to 338 (KQSTLESWF).

The protein belongs to the XPG/RAD2 endonuclease family. FEN1 subfamily. In terms of assembly, interacts with PCNA. PCNA stimulates the nuclease activity without altering cleavage specificity. It depends on Mg(2+) as a cofactor.

Structure-specific nuclease with 5'-flap endonuclease and 5'-3' exonuclease activities involved in DNA replication and repair. During DNA replication, cleaves the 5'-overhanging flap structure that is generated by displacement synthesis when DNA polymerase encounters the 5'-end of a downstream Okazaki fragment. Binds the unpaired 3'-DNA end and kinks the DNA to facilitate 5' cleavage specificity. Cleaves one nucleotide into the double-stranded DNA from the junction in flap DNA, leaving a nick for ligation. Also involved in the base excision repair (BER) pathway. Acts as a genome stabilization factor that prevents flaps from equilibrating into structures that lead to duplications and deletions. Also possesses 5'-3' exonuclease activity on nicked or gapped double-stranded DNA. The sequence is that of Flap endonuclease 1 from Pyrococcus furiosus (strain ATCC 43587 / DSM 3638 / JCM 8422 / Vc1).